The following is a 764-amino-acid chain: Dehydrocurvularin biosynthesis regulator (764 aa).

Residues 28 to 59 constitute a DNA-binding region (zn(2)-C6 fungal-type); sequence CWECKRRKMKCIFDPRITSTSCNGCRQRGSPC. Disordered stretches follow at residues 73–94, 112–136, and 633–672; these read HGAN…SDDA, YRYL…ASTC, and FPTS…PALS. A compositionally biased stretch (polar residues) spans 77 to 88; the sequence is DSASLDASTPIA. The span at 663-672 shows a compositional bias: polar residues; sequence HPNTPSPALS.

Its subcellular location is the nucleus. Transcription factor involved in regulation of the dehydrocurvularin biosynthesis gene cluster. The chain is Dehydrocurvularin biosynthesis regulator from Alternaria cinerariae.